Reading from the N-terminus, the 394-residue chain is AEINLVRRRVNNLEEEVTRIKKDNLYLVNELNKARSDLDQETLNRIDFQNQLQTLLEEIDFMRRVHDQEITELQAMAARDTTPENREYFKNELSSAIRDIRAEYDQICNINRTDMESWYKLKVQEIQTQSTRQNLEQGYAKEEVKRLRVQLSELRGKLADLEGRNSLLEKQTQELNYQLEDDQRSYEAALNDRDAQIRKMREECQALMMELQMLLDTKQTLDAEIAIYRKMLEGEENRAGLRQLVEQVVKTHSLTEIGETESIRVLKGETASRTSFQRSAKGNVSIQDAASDGKYILSENTHRSKEEPIGEWRLKRKIDGKREIVYTFPTNFVLKPGKSVKIWARGQGVYSPPDQLVFDAEDSFGIGSNVQTILFNKEGEERASHIQRSSHTIN.

The segment at 1-73 (AEINLVRRRV…RVHDQEITEL (73 aa)) is coil 1B. Residues 1–239 (AEINLVRRRV…KMLEGEENRA (239 aa)) form the IF rod domain. The tract at residues 74–91 (QAMAARDTTPENREYFKN) is linker 12. The coil 2 stretch occupies residues 92–239 (ELSSAIRDIR…KMLEGEENRA (148 aa)). Residues 240–394 (GLRQLVEQVV…HIQRSSHTIN (155 aa)) form a tail region. One can recognise an LTD domain in the interval 272 to 389 (SRTSFQRSAK…EERASHIQRS (118 aa)).

It belongs to the intermediate filament family.

The sequence is that of Muscle cell intermediate filament protein AV71 (AV71) from Acanthocheilonema viteae (Filarial nematode worm).